A 300-amino-acid polypeptide reads, in one-letter code: Probable alpha-L-glutamate ligase (300 aa).

Positions 104–287 (LQLLARQGID…IAGRMIQWIE (184 aa)) constitute an ATP-grasp domain. ATP is bound by residues Lys141, 178–179 (EY), Asp187, and 211–213 (RSN). Asp248, Glu260, and Asn262 together coordinate Mg(2+). Residues Asp248, Glu260, and Asn262 each coordinate Mn(2+).

This sequence belongs to the RimK family. Mg(2+) is required as a cofactor. Requires Mn(2+) as cofactor.

This Citrobacter koseri (strain ATCC BAA-895 / CDC 4225-83 / SGSC4696) protein is Probable alpha-L-glutamate ligase.